The following is a 343-amino-acid chain: Dihydroorotate dehydrogenase (quinone) (343 aa).

FMN is bound by residues 65 to 69 and threonine 89; that span reads AGFDK. Lysine 69 serves as a coordination point for substrate. 114–118 contributes to the substrate binding site; it reads NRMGF. The FMN site is built by asparagine 145 and asparagine 178. Asparagine 178 serves as a coordination point for substrate. Serine 181 (nucleophile) is an active-site residue. Residue asparagine 183 coordinates substrate. Lysine 215 and threonine 243 together coordinate FMN. 244 to 245 serves as a coordination point for substrate; that stretch reads NT. FMN contacts are provided by residues glycine 269, glycine 298, and 319 to 320; that span reads YT.

This sequence belongs to the dihydroorotate dehydrogenase family. Type 2 subfamily. As to quaternary structure, monomer. FMN serves as cofactor.

It is found in the cell membrane. It carries out the reaction (S)-dihydroorotate + a quinone = orotate + a quinol. It participates in pyrimidine metabolism; UMP biosynthesis via de novo pathway; orotate from (S)-dihydroorotate (quinone route): step 1/1. Its function is as follows. Catalyzes the conversion of dihydroorotate to orotate with quinone as electron acceptor. This Leifsonia xyli subsp. xyli (strain CTCB07) protein is Dihydroorotate dehydrogenase (quinone).